We begin with the raw amino-acid sequence, 247 residues long: DNA repair protein RecO (247 aa).

Belongs to the RecO family.

In terms of biological role, involved in DNA repair and RecF pathway recombination. In Alkalilimnicola ehrlichii (strain ATCC BAA-1101 / DSM 17681 / MLHE-1), this protein is DNA repair protein RecO.